We begin with the raw amino-acid sequence, 154 residues long: Large ribosomal subunit protein uL15 (154 aa).

The interval 1-54 (MKLHDLTPAPGSRKPKKRVGRGPGGTDKTAGRGHKGQKSRSGAGKGPFFEGGRS) is disordered.

Belongs to the universal ribosomal protein uL15 family. Part of the 50S ribosomal subunit.

Binds to the 23S rRNA. This is Large ribosomal subunit protein uL15 from Deinococcus geothermalis (strain DSM 11300 / CIP 105573 / AG-3a).